Here is a 477-residue protein sequence, read N- to C-terminus: Cysteine--tRNA ligase (477 aa).

C28 serves as a coordination point for Zn(2+). Residues 30–40 carry the 'HIGH' region motif; sequence PTVYDYPHLGH. C208, H233, and E237 together coordinate Zn(2+). The short motif at 265-269 is the 'KMSKS' region element; it reads KMSKS. K268 is a binding site for ATP.

It belongs to the class-I aminoacyl-tRNA synthetase family. Zn(2+) serves as cofactor.

The protein localises to the cytoplasm. It carries out the reaction tRNA(Cys) + L-cysteine + ATP = L-cysteinyl-tRNA(Cys) + AMP + diphosphate. The protein is Cysteine--tRNA ligase of Pyrococcus furiosus (strain ATCC 43587 / DSM 3638 / JCM 8422 / Vc1).